The primary structure comprises 60 residues: UPF0434 protein Ent638_1436 (60 aa).

Belongs to the UPF0434 family.

In Enterobacter sp. (strain 638), this protein is UPF0434 protein Ent638_1436.